A 308-amino-acid polypeptide reads, in one-letter code: UPF0026 protein jhp_0109 (308 aa).

The Radical SAM core domain maps to 18–247 (FGKSLGVDLS…VSLPKRSTAQ (230 aa)). [4Fe-4S] cluster is bound by residues cysteine 33, cysteine 37, and cysteine 40.

This sequence belongs to the UPF0026 family. [4Fe-4S] cluster serves as cofactor.

The polypeptide is UPF0026 protein jhp_0109 (Helicobacter pylori (strain J99 / ATCC 700824) (Campylobacter pylori J99)).